The chain runs to 448 residues: Lipoamide acyltransferase component of branched-chain alpha-keto acid dehydrogenase complex, mitochondrial (448 aa).

The 76-residue stretch at 30 to 105 folds into the Lipoyl-binding domain; that stretch reads VVQFKLSDIG…RVGQALIDVE (76 aa). N6-lipoyllysine is present on lysine 71. Disordered regions lie at residues 108 to 146 and 191 to 211; these read GNVE…GKVL and TSGS…SKSY. The span at 121-136 shows a compositional bias: low complexity; it reads ASSSPEAPKSSAPKAP. Positions 146–183 constitute a Peripheral subunit-binding (PSBD) domain; that stretch reads LATPAVRRIAIENKIKLAEVRGTGKDGRVLKEDVLKFL. Polar residues predominate over residues 191–210; the sequence is TSGSTNIRTTHQAPQPSSKS. The CoA site is built by arginine 257, serine 272, aspartate 315, serine 365, asparagine 366, glycine 390, and isoleucine 392. Catalysis depends on residues histidine 418 and aspartate 422.

This sequence belongs to the 2-oxoacid dehydrogenase family. (R)-lipoate is required as a cofactor. In terms of tissue distribution, ubiquitously expressed.

The protein localises to the mitochondrion matrix. It localises to the cytoplasm. Its subcellular location is the cytosol. It is found in the cell projection. The protein resides in the dendrite. The protein localises to the cilium. It catalyses the reaction N(6)-[(R)-dihydrolipoyl]-L-lysyl-[protein] + 2-methylpropanoyl-CoA = N(6)-[(R)-S(8)-2-methylpropanoyldihydrolipoyl]-L-lysyl-[protein] + CoA. The branched-chain alpha-keto dehydrogenase complex catalyzes the overall conversion of alpha-keto acids to acyl-CoA and CO(2). It contains multiple copies of three enzymatic components: branched-chain alpha-keto acid decarboxylase (E1), lipoamide acyltransferase (E2) and lipoamide dehydrogenase (E3). Within this complex, the catalytic function of this enzyme is to accept, and to transfer to coenzyme A, acyl groups that are generated by the branched-chain alpha-keto acid decarboxylase component. Required for the catabolism of branched-chain amino acids and the subsequent synthesis of monomethyl branched-chain fatty acids, which are important for regulating postembryonic growth. The chain is Lipoamide acyltransferase component of branched-chain alpha-keto acid dehydrogenase complex, mitochondrial from Caenorhabditis elegans.